The chain runs to 486 residues: Protein nucleotidyltransferase YdiU (486 aa).

Glycine 90, glycine 92, arginine 93, lysine 113, aspartate 125, glycine 126, arginine 176, and arginine 183 together coordinate ATP. The Proton acceptor role is filled by aspartate 252. Mg(2+)-binding residues include asparagine 253 and aspartate 262. Aspartate 262 lines the ATP pocket.

It belongs to the SELO family. The cofactor is Mg(2+). Requires Mn(2+) as cofactor.

It catalyses the reaction L-seryl-[protein] + ATP = 3-O-(5'-adenylyl)-L-seryl-[protein] + diphosphate. The catalysed reaction is L-threonyl-[protein] + ATP = 3-O-(5'-adenylyl)-L-threonyl-[protein] + diphosphate. It carries out the reaction L-tyrosyl-[protein] + ATP = O-(5'-adenylyl)-L-tyrosyl-[protein] + diphosphate. The enzyme catalyses L-histidyl-[protein] + UTP = N(tele)-(5'-uridylyl)-L-histidyl-[protein] + diphosphate. It catalyses the reaction L-seryl-[protein] + UTP = O-(5'-uridylyl)-L-seryl-[protein] + diphosphate. The catalysed reaction is L-tyrosyl-[protein] + UTP = O-(5'-uridylyl)-L-tyrosyl-[protein] + diphosphate. In terms of biological role, nucleotidyltransferase involved in the post-translational modification of proteins. It can catalyze the addition of adenosine monophosphate (AMP) or uridine monophosphate (UMP) to a protein, resulting in modifications known as AMPylation and UMPylation. This is Protein nucleotidyltransferase YdiU from Pseudomonas paraeruginosa (strain DSM 24068 / PA7) (Pseudomonas aeruginosa (strain PA7)).